The primary structure comprises 541 residues: Chaperonin GroEL, cyanelle (541 aa).

ATP-binding positions include 29–32 (TLGP), 86–90 (DGTTT), glycine 413, 479–481 (NAA), and aspartate 495.

The protein belongs to the chaperonin (HSP60) family. Forms a cylinder of 14 subunits composed of two heptameric rings stacked back-to-back. Interacts with the co-chaperonin GroES.

The protein resides in the plastid. Its subcellular location is the cyanelle. It carries out the reaction ATP + H2O + a folded polypeptide = ADP + phosphate + an unfolded polypeptide.. Together with its co-chaperonin GroES, plays an essential role in assisting protein folding. The GroEL-GroES system forms a nano-cage that allows encapsulation of the non-native substrate proteins and provides a physical environment optimized to promote and accelerate protein folding. The polypeptide is Chaperonin GroEL, cyanelle (Cyanophora paradoxa).